Consider the following 196-residue polypeptide: RNA pyrophosphohydrolase (196 aa).

The region spanning 6 to 149 (GYRPNVGIVI…KRDVYRKVMK (144 aa)) is the Nudix hydrolase domain. A Nudix box motif is present at residues 38 to 59 (GGINDNESAEQAMYRELHEEVG).

It belongs to the Nudix hydrolase family. RppH subfamily. A divalent metal cation serves as cofactor.

Accelerates the degradation of transcripts by removing pyrophosphate from the 5'-end of triphosphorylated RNA, leading to a more labile monophosphorylated state that can stimulate subsequent ribonuclease cleavage. The sequence is that of RNA pyrophosphohydrolase from Haemophilus influenzae (strain ATCC 51907 / DSM 11121 / KW20 / Rd).